The sequence spans 272 residues: uncharacterized protein (272 aa).

The active site involves glutamate 163.

Belongs to the glycosyl hydrolase 25 family.

This is an uncharacterized protein from Escherichia coli O157:H7.